The following is a 291-amino-acid chain: N-acetylmannosamine kinase (291 aa).

ATP contacts are provided by residues 5-12 (AIDIGGTK) and 132-139 (GVGGGVVS). Positions 156, 166, 168, and 173 each coordinate Zn(2+).

Belongs to the ROK (NagC/XylR) family. NanK subfamily. Homodimer.

It carries out the reaction an N-acyl-D-mannosamine + ATP = an N-acyl-D-mannosamine 6-phosphate + ADP + H(+). Its pathway is amino-sugar metabolism; N-acetylneuraminate degradation; D-fructose 6-phosphate from N-acetylneuraminate: step 2/5. Functionally, catalyzes the phosphorylation of N-acetylmannosamine (ManNAc) to ManNAc-6-P. This is N-acetylmannosamine kinase from Escherichia coli (strain SE11).